The chain runs to 114 residues: Large ribosomal subunit protein bL20 (114 aa).

It belongs to the bacterial ribosomal protein bL20 family.

In terms of biological role, binds directly to 23S ribosomal RNA and is necessary for the in vitro assembly process of the 50S ribosomal subunit. It is not involved in the protein synthesizing functions of that subunit. The protein is Large ribosomal subunit protein bL20 of Anaeromyxobacter dehalogenans (strain 2CP-1 / ATCC BAA-258).